A 285-amino-acid chain; its full sequence is Shikimate dehydrogenase (NADP(+)) (285 aa).

Residues serine 19–serine 21 and threonine 66 each bind shikimate. Lysine 70 (proton acceptor) is an active-site residue. Asparagine 91 and aspartate 107 together coordinate shikimate. Residues glycine 129–alanine 133 and leucine 228 contribute to the NADP(+) site. Tyrosine 230 lines the shikimate pocket. Glycine 251 serves as a coordination point for NADP(+).

Belongs to the shikimate dehydrogenase family. As to quaternary structure, homodimer.

The enzyme catalyses shikimate + NADP(+) = 3-dehydroshikimate + NADPH + H(+). Its pathway is metabolic intermediate biosynthesis; chorismate biosynthesis; chorismate from D-erythrose 4-phosphate and phosphoenolpyruvate: step 4/7. Involved in the biosynthesis of the chorismate, which leads to the biosynthesis of aromatic amino acids. Catalyzes the reversible NADPH linked reduction of 3-dehydroshikimate (DHSA) to yield shikimate (SA). The sequence is that of Shikimate dehydrogenase (NADP(+)) from Prochlorococcus marinus (strain MIT 9515).